The following is a 91-amino-acid chain: DNA-directed RNA polymerase subunit omega (91 aa).

The protein belongs to the RNA polymerase subunit omega family. The RNAP catalytic core consists of 2 alpha, 1 beta, 1 beta' and 1 omega subunit. When a sigma factor is associated with the core the holoenzyme is formed, which can initiate transcription.

The catalysed reaction is RNA(n) + a ribonucleoside 5'-triphosphate = RNA(n+1) + diphosphate. Its function is as follows. Promotes RNA polymerase assembly. Latches the N- and C-terminal regions of the beta' subunit thereby facilitating its interaction with the beta and alpha subunits. The polypeptide is DNA-directed RNA polymerase subunit omega (Nocardia farcinica (strain IFM 10152)).